The primary structure comprises 567 residues: Cytochrome P450 monooxygenase 69 (567 aa).

Residues 7–24 (ELAALTVVLLATGVLFYA) form a helical membrane-spanning segment. 4 N-linked (GlcNAc...) asparagine glycosylation sites follow: asparagine 25, asparagine 81, asparagine 223, and asparagine 279. Cysteine 475 is a binding site for heme.

The protein belongs to the cytochrome P450 family. It depends on heme as a cofactor.

It is found in the membrane. It functions in the pathway secondary metabolite biosynthesis. Its function is as follows. Cytochrome P450 monooxygenase that is able to use 4-ethoxybenzoic acid as a substrate for oxidation. The chain is Cytochrome P450 monooxygenase 69 from Postia placenta (strain ATCC 44394 / Madison 698-R) (Brown rot fungus).